Consider the following 257-residue polypeptide: GTP cyclohydrolase III (257 aa).

The protein belongs to the archaeal-type GTP cyclohydrolase family.

It catalyses the reaction GTP + 3 H2O = 2-amino-5-formylamino-6-(5-phospho-D-ribosylamino)pyrimidin-4(3H)-one + 2 phosphate + 2 H(+). Its function is as follows. Catalyzes the formation of 2-amino-5-formylamino-6-ribofuranosylamino-4(3H)-pyrimidinone ribonucleotide monophosphate and inorganic phosphate from GTP. Also has an independent pyrophosphate phosphohydrolase activity. This chain is GTP cyclohydrolase III, found in Halorubrum lacusprofundi (strain ATCC 49239 / DSM 5036 / JCM 8891 / ACAM 34).